The chain runs to 211 residues: Transcription factor E (211 aa).

One can recognise an HTH TFE/IIEalpha-type domain in the interval 10–130 (GNPAIYQYLL…LWLMRMDHMN (121 aa)).

It belongs to the TFE family. In terms of assembly, monomer. Interaction with RNA polymerase subunits RpoF and RpoE is necessary for Tfe stimulatory transcription activity. Able to interact with Tbp and RNA polymerase in the absence of DNA promoter. Interacts both with the preinitiation and elongation complexes.

Transcription factor that plays a role in the activation of archaeal genes transcribed by RNA polymerase. Facilitates transcription initiation by enhancing TATA-box recognition by TATA-box-binding protein (Tbp), and transcription factor B (Tfb) and RNA polymerase recruitment. Not absolutely required for transcription in vitro, but particularly important in cases where Tbp or Tfb function is not optimal. It dynamically alters the nucleic acid-binding properties of RNA polymerases by stabilizing the initiation complex and destabilizing elongation complexes. Seems to translocate with the RNA polymerase following initiation and acts by binding to the non template strand of the transcription bubble in elongation complexes. In Methanocorpusculum labreanum (strain ATCC 43576 / DSM 4855 / Z), this protein is Transcription factor E.